Reading from the N-terminus, the 413-residue chain is MSATATTTVVEPPTTTLTGATEPPFTAYTTSQGLRVSPVPLPEHNTDVGFGALIENVDLNNLSDEQFEDIRKALFEHQVVCFPNQHNLPPETQYAITHRFDPESSTYGHGNRTNQQNNSILHPDLHTLPGVPQVQLIGHGVVKDHYGLEEVRLKHPHHRTFHRDPISEEEEKEKQVTRFYRWHIDAALYDYNPPVVTTLLAVNAPQGTQTLRYDDKSGHEMPVPLGSTAFASGYRMYELLTDEEKKVAARTRVQYFPHAYVTINKARALPNGLGMYSEGLELDKSELPPWEESRVKTFPLLWKNPVTGKLALQTHGCCAEKILIDNEDGTTTVIDDLPKVREILYNYQRPGINPERVYCHDWKNGDFVIFHNRGVTHCITGAYRDDQTRIFHQCNLAASHPPAGPSEEDIAAM.

The span at 1–18 (MSATATTTVVEPPTTTLT) shows a compositional bias: low complexity. A disordered region spans residues 1–24 (MSATATTTVVEPPTTTLTGATEPP). Fe cation contacts are provided by His-183 and Asp-185. 2 residues coordinate 2-oxoglutarate: Thr-228 and Trp-362. Fe cation is bound at residue His-377. Arg-389 lines the 2-oxoglutarate pocket.

The protein belongs to the TfdA dioxygenase family. It depends on Fe(2+) as a cofactor.

Its subcellular location is the cytoplasm. It is found in the cytosol. The enzyme catalyses xanthine + 2-oxoglutarate + O2 = urate + succinate + CO2. In terms of biological role, alpha-ketoglutarate-dependent xanthine dioxygenase is a non-heme mononuclear Fe(2+) enzyme that decarboxylates alpha-ketoglutarate to succinate and CO(2) while hydroxylating xanthine to generate uric acid. Allows xanthine utilization as a nitrogen source. The protein is Alpha-ketoglutarate-dependent xanthine dioxygenase xan1 (xan1) of Schizosaccharomyces pombe (strain 972 / ATCC 24843) (Fission yeast).